The chain runs to 582 residues: Mitogen-activated protein kinase 17 (582 aa).

Residues 22-61 (SSSFHLTTTGDDTVKDLHDPRREDAEGDGWEEVHEGPESD) are disordered. The segment covering 33 to 45 (DTVKDLHDPRRED) has biased composition (basic and acidic residues). The Protein kinase domain maps to 105 to 396 (YKVSEVIGKG…AEEALTDPYF (292 aa)). ATP-binding positions include 111–119 (IGKGSYGVV) and Lys134. Asp231 acts as the Proton acceptor in catalysis. Thr267 carries the post-translational modification Phosphothreonine. The TXY signature appears at 267–269 (TDY). Tyr269 carries the post-translational modification Phosphotyrosine. 2 disordered regions span residues 474 to 502 (EGVS…GNKH) and 542 to 582 (ISAS…QLKT). Polar residues predominate over residues 482 to 491 (SSPQLRQNAS). Residues 493–502 (PRERAIGNKH) are compositionally biased toward basic and acidic residues. The segment covering 557-572 (DQEDSLTESMDETADE) has biased composition (acidic residues).

Belongs to the protein kinase superfamily. CMGC Ser/Thr protein kinase family. MAP kinase subfamily. Post-translationally, dually phosphorylated on Thr-267 and Tyr-269, which activates the enzyme.

It carries out the reaction L-seryl-[protein] + ATP = O-phospho-L-seryl-[protein] + ADP + H(+). The enzyme catalyses L-threonyl-[protein] + ATP = O-phospho-L-threonyl-[protein] + ADP + H(+). Its activity is regulated as follows. Activated by threonine and tyrosine phosphorylation. The protein is Mitogen-activated protein kinase 17 (MPK17) of Oryza sativa subsp. japonica (Rice).